Reading from the N-terminus, the 117-residue chain is Chondroitin proteoglycan 7 (117 aa).

A signal peptide spans 1 to 19 (MQTITLLALLACIAVPIFA). A disordered region spans residues 31–97 (VEASGEGSGE…SGENLSNGIV (67 aa)). 2 stretches are compositionally biased toward low complexity: residues 32-41 (EASGEGSGES) and 48-57 (ESSGEGSGES). Residues serine 66, serine 70, serine 74, serine 84, and serine 88 are each glycosylated (O-linked (Xyl...) (chondroitin sulfate) serine). Low complexity predominate over residues 75-95 (GASDAVLESSGEGSGENLSNG). Residue asparagine 91 is glycosylated (N-linked (GlcNAc...) asparagine).

The polypeptide is Chondroitin proteoglycan 7 (cpg-7) (Caenorhabditis briggsae).